A 219-amino-acid polypeptide reads, in one-letter code: Transmembrane emp24 domain-containing protein 10 (219 aa).

The signal sequence occupies residues methionine 1–glycine 31. Residues methionine 1–glutamate 142 are required for interaction with STX17. Over isoleucine 32 to arginine 185 the chain is Lumenal. The region spanning arginine 41 to serine 193 is the GOLD domain. Positions leucine 147–threonine 178 are required for TMED10 and TMED2 cis-Golgi network localization. Residues arginine 171 and arginine 176 each carry the dimethylated arginine modification. N-linked (GlcNAc...) asparagine glycosylation occurs at asparagine 179. A helical transmembrane segment spans residues valine 186–phenylalanine 206. Residues glutamine 204–glutamate 219 form an interaction with COPG1 region. Topologically, residues tyrosine 207–glutamate 219 are cytoplasmic. The tract at residues tyrosine 207–glutamate 219 is interaction with ARF1 and IL1B. A COPII vesicle coat-binding motif is present at residues phenylalanine 211–phenylalanine 212. Positions phenylalanine 211 to glutamate 219 match the COPI vesicle coat-binding motif.

It belongs to the EMP24/GP25L family. As to quaternary structure, predominantly dimeric and to a lesser extent monomeric in the ER. Monomer and dimer in ERGIC and cis-Golgi network. Forms homooligomer (via GOLD domain); the assembly is promoted by direct binding with leaderless cargos and may form a protein channel that facilitates cargo entry into the ERGIC. Forms heterooligomeric complexes with other members of the p24 family such as TMED2, TMED7 and TMED9. Interacts (via GOLD domain) with TMED2 (via GOLD domain); the complex is required for export of TMED10 from the ER to the cis-Golgi network; the complex is proposed to be involved in cis-Golgi network dynamics and / or biogenesis. Associates with the COPI vesicle coat subunits (coatomer). Tetramerization of the cytoplasmic domain at the Golgi membrane in vitro; the complex is proposed to interact with COPI coatomer and induce budding of the vesicles. Interacts with COPG1; the interaction involves TMED10 homodimer. Interacts with ARF1 (GDP-bound); the interaction probably involves a TMED10 oligomer. Interacts with SEC23A, SEC24B, SEC24C and SEC24D components of the coat protein complex II/COPII, indicative of an association of TMED10 with the COPII vesicle coat. Interacts with CD59. Interacts with MPPE1/PGAP5; the complex might recruit and sort GPI-anchored proteins to the ER-exit site, or the interaction might lead to recycling of PGAP5 between the ER and the Golgi. Interacts with F2LR1/PAR2. Interacts with KDELR2/ERD2; the interaction is disrupted by KDELR2 ligand. Found in a complex composed at least of SURF4, TMED2 and TMED10. Associates with the presenilin-dependent gamma-secretase complex. Interacts with STX17; the interaction is direct. Interacts with IL-1; the interaction is direct. Interacts with RAB21 (active GTP-bound form); the interaction is indirect and regulates TMED10 abundance and localization at the Golgi.

It localises to the endoplasmic reticulum membrane. The protein localises to the endoplasmic reticulum-Golgi intermediate compartment membrane. The protein resides in the golgi apparatus membrane. It is found in the golgi apparatus. Its subcellular location is the cis-Golgi network membrane. It localises to the trans-Golgi network membrane. The protein localises to the cytoplasmic vesicle. The protein resides in the secretory vesicle membrane. It is found in the cell membrane. Its subcellular location is the melanosome. Its function is as follows. Cargo receptor involved in protein vesicular trafficking and quality control in the endoplasmic reticulum (ER) and Golgi. The p24 protein family is a group of transmembrane proteins that bind coat protein complex I/COPI and coat protein complex II/COPII involved in vesicular trafficking between the membranes. Acts at the lumenal side for incorporation of secretory cargo molecules into transport vesicles and involved in vesicle coat formation at the cytoplasmic side. Mainly functions in the early secretory pathway and cycles between the ER, ER-Golgi intermediate compartment (ERGIC) and Golgi, mediating cargo transport through COPI and COPII-coated vesicles. In COPII vesicle-mediated anterograde transport, involved in the transport of GPI-anchored proteins by acting together with TMED2 as their cargo receptor; the function specifically implies SEC24C and SEC24D of the COPII vesicle coat and lipid raft-like microdomains of the ER. Recognizes GPI anchors structural remodeled in the ER by the GPI inositol-deacylase/PGAP1 and the metallophosphoesterase MPPE1/PGAP5. In COPI vesicle-mediated retrograde transport, involved in the biogenesis of COPI vesicles and vesicle coat recruitment. Involved in trafficking of amyloid beta A4 protein and soluble APP-beta release (independent from the modulation of gamma-secretase activity). Involved in the KDELR2-mediated retrograde transport of the toxin A subunit (CTX-A-K63)together with COPI and the COOH terminus of KDELR2. On Golgi membranes, acts as a primary receptor for ARF1-GDP, a GTP-binding protein involved in COPI-vesicle formation. Increases coatomer-dependent GTPase-activating activity of ARFGAP2 which mediates the hydrolysis of ARF1-bound GTP and therefore modulates protein trafficking from the Golgi apparatus. Involved in the exocytic trafficking of G protein-coupled receptors F2LR1/PAR2 (trypsin and tryspin-like enzyme receptor), OPRM1 (opioid receptor) and P2RY4 (UTD and UDP receptor) from the Golgi to the plasma membrane, thus contributing to receptor resensitization. In addition to its cargo receptor activity, may also act as a protein channel after oligomerization, facilitating the post-translational entry of leaderless cytoplasmic cargo into the ERGIC. Involved in the translocation into ERGIC, the vesicle entry and the secretion of leaderless cargos (lacking the secretion signal sequence), including the mature form of interleukin 1/IL-1 family members, the alpha-crystallin B chain HSPB5, the carbohydrate-binding proteins galectin-1/LGALS1 and galectin-3/LGALS3, the microtubule-associated protein Tau/MAPT, and the annexin A1/ANXA1; the translocation process is dependent on cargo protein unfolding and enhanced by chaperones HSP90AB1 and HSP90B1/GRP9. Could also associates with the presenilin-dependent gamma-secretase complex in order to regulate gamma-cleavages of the amyloid beta A4 protein to yield amyloid-beta 40/Abeta40. The sequence is that of Transmembrane emp24 domain-containing protein 10 from Mus musculus (Mouse).